The sequence spans 233 residues: Uracil-DNA glycosylase (233 aa).

Asp70 serves as the catalytic Proton acceptor.

Belongs to the uracil-DNA glycosylase (UDG) superfamily. UNG family.

Its subcellular location is the cytoplasm. The enzyme catalyses Hydrolyzes single-stranded DNA or mismatched double-stranded DNA and polynucleotides, releasing free uracil.. Excises uracil residues from the DNA which can arise as a result of misincorporation of dUMP residues by DNA polymerase or due to deamination of cytosine. In Helicobacter acinonychis (strain Sheeba), this protein is Uracil-DNA glycosylase.